A 118-amino-acid chain; its full sequence is MRPFQLLSALAIFINLEAVEAAAYWDCDGTEIPERNVRAAVVLAFNYRKESFHGYPATFIIGSTFSGVGEVRQFPVEDSDANWQGGAVKYYILTNKRGSYLEVFSSVGSGNKCTFVEG.

The N-terminal stretch at 1–21 (MRPFQLLSALAIFINLEAVEA) is a signal peptide. A disulfide bridge connects residues Cys27 and Cys113.

As to quaternary structure, interacts in planta with the pathogenesis-related protein PR10.

The protein resides in the secreted. It is found in the host cell. Functionally, secreted effector that increases susceptibility to infection in both monocotyledonous and dicotyledonous plants. Non-catalytic homolog of fungal RNases that binds host RNA and inhibits the degradation of host ribosomal RNA induced by ribosome-inactivating proteins (RIPs), preventing host cell death, an inviable interaction and demise of the fungus. The chain is Secreted effector CSEP0064 from Blumeria graminis f. sp. hordei (strain DH14) (Barley powdery mildew).